Reading from the N-terminus, the 456-residue chain is GTPase Der (456 aa).

2 EngA-type G domains span residues 4–169 (PIVA…PSKE) and 178–353 (IQLA…EQHR). GTP-binding positions include 10 to 17 (GRPNVGKS), 57 to 61 (DTGGL), 120 to 123 (NKCE), 184 to 191 (GRPNVGKS), 231 to 235 (DTAGI), and 296 to 299 (NKWD). One can recognise a KH-like domain in the interval 354–439 (RRVSTSVVNE…PLKLFWRGKQ (86 aa)).

The protein belongs to the TRAFAC class TrmE-Era-EngA-EngB-Septin-like GTPase superfamily. EngA (Der) GTPase family. Associates with the 50S ribosomal subunit.

Its function is as follows. GTPase that plays an essential role in the late steps of ribosome biogenesis. The chain is GTPase Der from Prochlorococcus marinus (strain MIT 9211).